A 718-amino-acid chain; its full sequence is Quinolinate synthase, chloroplastic (718 aa).

Over residues 1–22 (MALALSVAPTSSSLSSLLSRTP) the composition is skewed to low complexity. Residues 1 to 29 (MALALSVAPTSSSLSSLLSRTPNPSPNFR) form a disordered region. Residues 1–70 (MALALSVAPT…VNASPFSISA (70 aa)) constitute a chloroplast transit peptide. Residue Cys-132 is the Cysteine persulfide intermediate of the active site. Iminosuccinate-binding residues include His-280 and Ser-306. Cys-360 provides a ligand contact to [4Fe-4S] cluster. Residues 389 to 391 (YIN) and Ser-411 each bind iminosuccinate. A [4Fe-4S] cluster-binding site is contributed by Cys-484. Residues 510–512 (HLE) and Thr-535 contribute to the iminosuccinate site. A [4Fe-4S] cluster-binding site is contributed by Cys-640.

Belongs to the quinolinate synthase family. Type 1 subfamily. In terms of assembly, homodimer. Interacts in vitro with NFS2, CpNIFS3 and AO. Part of a Cys defulfurase complex. [4Fe-4S] cluster is required as a cofactor. As to expression, expressed in roots, leaves, stems and flowers.

The protein resides in the plastid. It is found in the chloroplast. The catalysed reaction is iminosuccinate + dihydroxyacetone phosphate = quinolinate + phosphate + 2 H2O + H(+). It participates in cofactor biosynthesis; NAD(+) biosynthesis; quinolinate from iminoaspartate: step 1/1. Its function is as follows. Catalyzes the condensation of iminoaspartate with dihydroxyacetone phosphate to form quinolinate. Can complement nadA-deficient E.coli mutant. Essential for the de novo synthesis of NAD. Also participates in cysteine desulfurization mediated by NFS2. Can activate the cysteine desulfurase activity of NFS2 in vitro. In Arabidopsis thaliana (Mouse-ear cress), this protein is Quinolinate synthase, chloroplastic.